The chain runs to 168 residues: Auxin-responsive protein IAA1 (168 aa).

The interval 1-74 is disordered; the sequence is MEVTNGLNLK…NRKNNNNKNV (74 aa). Positions 14-18 match the EAR-like (transcriptional repression) motif; sequence LRLGL. Residues 23–34 show a composition bias toward polar residues; that stretch reads EEQQLELSCVRS. A PB1 domain is found at 74–161; it reads VSYVKVSMDG…SCQKLRIMKG (88 aa).

It belongs to the Aux/IAA family. Homodimers and heterodimers. Interacts with the auxin-responsive protein IAA2. Interacts with TPL. Post-translationally, phosphorylated by phytochrome A in vitro. In terms of tissue distribution, preferentially expressed in stems, leaves and flowers.

It localises to the nucleus. Its function is as follows. Aux/IAA proteins are short-lived transcriptional factors that function as repressors of early auxin response genes at low auxin concentrations. Repression is thought to result from the interaction with auxin response factors (ARFs), proteins that bind to the auxin-responsive promoter element (AuxRE). Formation of heterodimers with ARF proteins may alter their ability to modulate early auxin response genes expression. This Arabidopsis thaliana (Mouse-ear cress) protein is Auxin-responsive protein IAA1 (IAA1).